The chain runs to 64 residues: Conotoxin Im11.1 (64 aa).

An N-terminal signal peptide occupies residues 1 to 26; sequence MMFRLTSVSCFLLVIACLNLVVLTNA. Cystine bridges form between Cys27–Cys41, Cys34–Cys46, Cys40–Cys50, and Cys45–Cys54. Residue Asn57 is modified to Asparagine amide. Positions 61–64 are excised as a propeptide; that stretch reads ATFQ.

Belongs to the conotoxin I2 superfamily. In terms of tissue distribution, expressed by the venom duct.

The protein localises to the secreted. This chain is Conotoxin Im11.1, found in Conus imperialis (Imperial cone).